We begin with the raw amino-acid sequence, 249 residues long: Serine 3-dehydrogenase (249 aa).

6–30 (LITGATSGFGQATARRFVKEGWKVI) is a binding site for NADP(+). Ser135 contributes to the substrate binding site. Tyr148 serves as the catalytic Proton acceptor.

Belongs to the short-chain dehydrogenases/reductases (SDR) family. In terms of assembly, homotetramer.

The enzyme catalyses L-serine + NADP(+) = aminoacetaldehyde + CO2 + NADPH. Catalyzes the oxidation of the hydroxyl group of serine to form 2-aminomalonate semialdehyde which is spontaneously converted into 2-aminoacetaldehyde and CO(2). Also acts on D-serine, L-glycerate, D-glycerate and 2-methyl-DL-serine. Does not act on O-methyl-DL-serine and L-threonine. This Agrobacterium fabrum (strain C58 / ATCC 33970) (Agrobacterium tumefaciens (strain C58)) protein is Serine 3-dehydrogenase (sdh).